The sequence spans 216 residues: Thiopurine S-methyltransferase (216 aa).

Positions 10, 45, 66, and 123 each coordinate S-adenosyl-L-methionine.

The protein belongs to the class I-like SAM-binding methyltransferase superfamily. TPMT family.

It localises to the cytoplasm. The enzyme catalyses S-adenosyl-L-methionine + a thiopurine = S-adenosyl-L-homocysteine + a thiopurine S-methylether.. The protein is Thiopurine S-methyltransferase of Pseudomonas putida (strain ATCC 47054 / DSM 6125 / CFBP 8728 / NCIMB 11950 / KT2440).